The sequence spans 887 residues: Cadherin-1 (887 aa).

Residues 1–26 (MGRRWGSPALQRFPVLVLLLLLQVCG) form the signal peptide. Residues 27–160 (RRCDEAAPCQ…DPGFLRRQKR (134 aa)) constitute a propeptide that is removed on maturation. Cadherin domains lie at 161 to 268 (DWVI…KPVF), 269 to 381 (IKEV…IPIF), 382 to 493 (NPTM…PPVF), 494 to 599 (VPPI…DNGP), and 600 to 704 (TPEP…RRSY). At 161 to 714 (DWVIPPISCL…IVGGLGVPAI (554 aa)) the chain is on the extracellular side. Ca(2+) is bound at residue Asp263. An N-linked (GlcNAc...) asparagine glycan is attached at Asn291. Ca(2+) is bound at residue Asp294. The N-linked (GlcNAc...) asparagine glycan is linked to Asn346. Residues Asn564 and Asn643 are each glycosylated (N-linked (GlcNAc...) asparagine). A helical membrane pass occupies residues 715 to 735 (LGILGGILALLILLLLLLLFA). Topologically, residues 736-887 (RRRKVEKEPL…ELYGGGEDDE (152 aa)) are cytoplasmic. The interval 745-770 (LLPPEDDMRDNVYNYDEEGGGEEDQD) is disordered. The segment covering 759 to 770 (YDEEGGGEEDQD) has biased composition (acidic residues).

Homodimer. Interacts with CTNNA2. As to expression, expressed in the liver.

It is found in the cell junction. The protein localises to the adherens junction. Its subcellular location is the cell membrane. It localises to the endosome. The protein resides in the golgi apparatus. It is found in the trans-Golgi network. The protein localises to the cytoplasm. Its subcellular location is the desmosome. Cadherins are calcium-dependent cell adhesion proteins. They preferentially interact with themselves in a homophilic manner in connecting cells; cadherins may thus contribute to the sorting of heterogeneous cell types. Promotes organization of radial actin fiber structure and cellular response to contractile forces, via anchoring of radial actin fibers to CDH1 junction complexes at the cell membrane. E-cadherin is a ligand for integrin alpha-E/beta-7. The protein is Cadherin-1 (CDH1) of Gallus gallus (Chicken).